The primary structure comprises 254 residues: Triosephosphate isomerase (254 aa).

12 to 14 (NWK) is a substrate binding site. H99 (electrophile) is an active-site residue. Residue E169 is the Proton acceptor of the active site. Substrate-binding positions include G175, S214, and 235–236 (GG).

This sequence belongs to the triosephosphate isomerase family. As to quaternary structure, homodimer.

It is found in the cytoplasm. The enzyme catalyses D-glyceraldehyde 3-phosphate = dihydroxyacetone phosphate. The protein operates within carbohydrate biosynthesis; gluconeogenesis. Its pathway is carbohydrate degradation; glycolysis; D-glyceraldehyde 3-phosphate from glycerone phosphate: step 1/1. Its function is as follows. Involved in the gluconeogenesis. Catalyzes stereospecifically the conversion of dihydroxyacetone phosphate (DHAP) to D-glyceraldehyde-3-phosphate (G3P). The sequence is that of Triosephosphate isomerase from Chelativorans sp. (strain BNC1).